The chain runs to 464 residues: ATP synthase subunit beta (464 aa).

ATP is bound at residue 151 to 158 (GGAGVGKT).

Belongs to the ATPase alpha/beta chains family. In terms of assembly, F-type ATPases have 2 components, CF(1) - the catalytic core - and CF(0) - the membrane proton channel. CF(1) has five subunits: alpha(3), beta(3), gamma(1), delta(1), epsilon(1). CF(0) has three main subunits: a(1), b(2) and c(9-12). The alpha and beta chains form an alternating ring which encloses part of the gamma chain. CF(1) is attached to CF(0) by a central stalk formed by the gamma and epsilon chains, while a peripheral stalk is formed by the delta and b chains.

It is found in the cell membrane. It carries out the reaction ATP + H2O + 4 H(+)(in) = ADP + phosphate + 5 H(+)(out). Produces ATP from ADP in the presence of a proton gradient across the membrane. The catalytic sites are hosted primarily by the beta subunits. The sequence is that of ATP synthase subunit beta from Bacillus cytotoxicus (strain DSM 22905 / CIP 110041 / 391-98 / NVH 391-98).